We begin with the raw amino-acid sequence, 264 residues long: 3-methyl-2-oxobutanoate hydroxymethyltransferase (264 aa).

Asp-45 and Asp-84 together coordinate Mg(2+). Residues 45 to 46 (DS), Asp-84, and Lys-112 each bind 3-methyl-2-oxobutanoate. Glu-114 is a binding site for Mg(2+). The active-site Proton acceptor is the Glu-181.

The protein belongs to the PanB family. Homodecamer; pentamer of dimers. The cofactor is Mg(2+).

Its subcellular location is the cytoplasm. The enzyme catalyses 3-methyl-2-oxobutanoate + (6R)-5,10-methylene-5,6,7,8-tetrahydrofolate + H2O = 2-dehydropantoate + (6S)-5,6,7,8-tetrahydrofolate. The protein operates within cofactor biosynthesis; (R)-pantothenate biosynthesis; (R)-pantoate from 3-methyl-2-oxobutanoate: step 1/2. In terms of biological role, catalyzes the reversible reaction in which hydroxymethyl group from 5,10-methylenetetrahydrofolate is transferred onto alpha-ketoisovalerate to form ketopantoate. This chain is 3-methyl-2-oxobutanoate hydroxymethyltransferase, found in Shewanella oneidensis (strain ATCC 700550 / JCM 31522 / CIP 106686 / LMG 19005 / NCIMB 14063 / MR-1).